Reading from the N-terminus, the 595-residue chain is MLLPWQQTIIILFLGVNSLVAALRNTYRTVEELPTIPEGWIQGKPPSPETSIRMNLALFQEKAHAFEQMVVDISTPGHSNYGKHLSRRTLKDFLRPRKEVSDSILSWLEEAGVAKKSILNDGDWIHFAISVSQAERMLKTRFHYYHDSGDPSVFMIRTLQYSVPSHLAPDIHMIQPTTKFGKPKKHGNSIAKLETIQLSSNATTNCNVTITPQCLRDIYKMGNSLATPDYRNVIGVSGYLDQYARYNDFYKFIDLYAPDLKGANFSVKYIGKGQNLQNSTKNSVEASLDIDYALGLSNATTVFYTTSGRGPLVPDLEQPDQEHNSNEPYLDQLHYLLSLPSDELPAILSTSYGENEQSVPEKFSNATCSLFAQLAARGVSVIFSSGDTGVGSSCLTNGRKKVSRFNPTFPASCPFVTSVGATFRINPEMAISFSSGGFSDRHIRPRFQDDAVLTYLDKLGNQWEGLYDPRGRGIPDVAAQGSNFAVYDHGRVGMVSGTSASAPAFAAIIANLNSIRLNANKPVLGYLNPFIYGQGRQGFTDIVHGGSRGCAGYNSTNGSAPAVPYASWNATEGWDPVTGVGTPNFEILAKIVRDL.

The first 22 residues, 1 to 22, serve as a signal peptide directing secretion; that stretch reads MLLPWQQTIIILFLGVNSLVAA. The propeptide at 23 to 201 is removed in mature form; it reads LRNTYRTVEE…KLETIQLSSN (179 aa). 3 N-linked (GlcNAc...) asparagine glycosylation sites follow: asparagine 207, asparagine 264, and asparagine 278. Positions 209–595 constitute a Peptidase S53 domain; the sequence is TITPQCLRDI…EILAKIVRDL (387 aa). Residues glutamate 285 and aspartate 289 each act as charge relay system in the active site. Asparagine 298 and asparagine 365 each carry an N-linked (GlcNAc...) asparagine glycan. The active-site Charge relay system is serine 499. The Ca(2+) site is built by aspartate 541 and isoleucine 542. Asparagine 554, asparagine 557, and asparagine 569 each carry an N-linked (GlcNAc...) asparagine glycan. Ca(2+)-binding residues include glycine 573 and aspartate 575.

Requires Ca(2+) as cofactor.

It localises to the secreted. The protein resides in the extracellular space. It carries out the reaction Release of an N-terminal tripeptide from a polypeptide.. Its function is as follows. Secreted tripeptidyl-peptidase which degrades proteins at acidic pHs and is involved in virulence. This chain is Tripeptidyl-peptidase SED3 (SED3), found in Arthroderma otae (strain ATCC MYA-4605 / CBS 113480) (Microsporum canis).